We begin with the raw amino-acid sequence, 160 residues long: Biogenesis of lysosome-related organelles complex 1 subunit 5 (160 aa).

This sequence belongs to the BLOC1S5 family. In terms of assembly, component of the biogenesis of lysosome-related organelles complex-1 (BLOC-1) composed of Blos1, Blos2, Blos3, Blos4, Dysb, Muted, Pldn and Snapin.

Its function is as follows. Component of the biogenesis of lysosome-related organelles complex-1 (BLOC-1) involved in pigment granule biogenesis. This Drosophila melanogaster (Fruit fly) protein is Biogenesis of lysosome-related organelles complex 1 subunit 5.